The primary structure comprises 430 residues: Dihydroorotase (430 aa).

Residues His57 and His59 each coordinate Zn(2+). Residues 59–61 and Asn91 each bind substrate; that span reads HLR. Residues Asp151, His178, and His231 each coordinate Zn(2+). Residue Asn277 participates in substrate binding. A Zn(2+)-binding site is contributed by Asp304. Asp304 is a catalytic residue. Substrate-binding positions include His308 and 322 to 323; that span reads PG.

This sequence belongs to the metallo-dependent hydrolases superfamily. DHOase family. Class I DHOase subfamily. The cofactor is Zn(2+).

The enzyme catalyses (S)-dihydroorotate + H2O = N-carbamoyl-L-aspartate + H(+). Its pathway is pyrimidine metabolism; UMP biosynthesis via de novo pathway; (S)-dihydroorotate from bicarbonate: step 3/3. Functionally, catalyzes the reversible cyclization of carbamoyl aspartate to dihydroorotate. The protein is Dihydroorotase of Mycobacterium leprae (strain TN).